The primary structure comprises 49 residues: MGCAKSELLILLEYIDRECKDYESCKRIIVELEERVKKIAFVEAINDLF.

This is an uncharacterized protein from Sulfolobus spindle-shape virus 1 (SSV1).